Consider the following 405-residue polypeptide: Beta-citrylglutamate synthase B (405 aa).

Positions 115–300 (FQELAGHGVP…VAGIVADFVL (186 aa)) constitute an ATP-grasp domain. ATP is bound by residues Lys-154, 189 to 199 (QEYVKESHGRD), and Arg-215. Residues Asp-260, Glu-273, and Asn-275 each coordinate Mg(2+). Mn(2+) is bound by residues Asp-260, Glu-273, and Asn-275. Residues 359-387 (AMSTMSTSSTSSESEADLTETGPTPVGAN) are disordered. Low complexity predominate over residues 360–371 (MSTMSTSSTSSE).

Belongs to the RimK family. Mg(2+) is required as a cofactor. Requires Mn(2+) as cofactor.

It is found in the cytoplasm. It carries out the reaction citrate + L-glutamate + ATP = beta-citrylglutamate + ADP + phosphate + H(+). It catalyses the reaction N-acetyl-L-aspartate + L-glutamate + ATP = N-acetyl-L-aspartyl-L-glutamate + ADP + phosphate + H(+). Its function is as follows. Catalyzes the synthesis of beta-citryl-L-glutamate and N-acetyl-L-aspartyl-L-glutamate. Beta-citryl-L-glutamate is synthesized more efficiently than N-acetyl-L-aspartyl-L-glutamate. The sequence is that of Beta-citrylglutamate synthase B (rimklb) from Danio rerio (Zebrafish).